We begin with the raw amino-acid sequence, 782 residues long: Acetazolamide conferring resistance protein zam (782 aa).

The region spanning 270–579 (EVALSLESQA…QRLLKLVLTE (310 aa)) is the RNB domain. The region spanning 655-736 (GEIFRGLITG…YRQQIDLGAV (82 aa)) is the S1 motif domain. The segment at 737–782 (NNAPKDSANMDFDDDDEDGDEREEQDTMDWDAMEDGDDDEGGAVIF) is disordered. Acidic residues predominate over residues 747-782 (DFDDDDEDGDEREEQDTMDWDAMEDGDDDEGGAVIF).

It belongs to the RNR ribonuclease family.

Not known; control resistance to the carbonic anhydrase inhibitor acetazolamide. The polypeptide is Acetazolamide conferring resistance protein zam (zam) (Synechocystis sp. (strain ATCC 27184 / PCC 6803 / Kazusa)).